Consider the following 100-residue polypeptide: Small ribosomal subunit protein uS14c (100 aa).

The protein belongs to the universal ribosomal protein uS14 family. As to quaternary structure, part of the 30S ribosomal subunit.

The protein localises to the plastid. Its subcellular location is the chloroplast. Functionally, binds 16S rRNA, required for the assembly of 30S particles. The chain is Small ribosomal subunit protein uS14c from Chlorokybus atmophyticus (Soil alga).